We begin with the raw amino-acid sequence, 326 residues long: Fructose-1,6-bisphosphatase class 1 2 (326 aa).

Mg(2+)-binding residues include E84, D103, L105, and D106. Residues 106-109 (DGSS), N198, and K262 contribute to the substrate site. E268 lines the Mg(2+) pocket.

Belongs to the FBPase class 1 family. Homotetramer. Mg(2+) is required as a cofactor.

The protein resides in the cytoplasm. The enzyme catalyses beta-D-fructose 1,6-bisphosphate + H2O = beta-D-fructose 6-phosphate + phosphate. Its pathway is carbohydrate biosynthesis; gluconeogenesis. In Pseudoalteromonas translucida (strain TAC 125), this protein is Fructose-1,6-bisphosphatase class 1 2.